A 777-amino-acid polypeptide reads, in one-letter code: 1,4-alpha-glucan branching enzyme GlgB (777 aa).

Asp-408 serves as the catalytic Nucleophile. The active-site Proton donor is the Glu-461.

The protein belongs to the glycosyl hydrolase 13 family. GlgB subfamily. As to quaternary structure, monomer.

The enzyme catalyses Transfers a segment of a (1-&gt;4)-alpha-D-glucan chain to a primary hydroxy group in a similar glucan chain.. It participates in glycan biosynthesis; glycogen biosynthesis. In terms of biological role, catalyzes the formation of the alpha-1,6-glucosidic linkages in glycogen by scission of a 1,4-alpha-linked oligosaccharide from growing alpha-1,4-glucan chains and the subsequent attachment of the oligosaccharide to the alpha-1,6 position. The polypeptide is 1,4-alpha-glucan branching enzyme GlgB (Actinobacillus pleuropneumoniae serotype 5b (strain L20)).